Here is a 317-residue protein sequence, read N- to C-terminus: MTTALDQLKQYTTVVADTGDFQQLAQYQPQDATTNPSLILKAVQKDAYKPILEKTVRDHRNESTDFIIDRLLIAFGTEILKLIPGRVSTEVDARLSFDTPRSIDKGRELIKLYEAAGIGRERILIKLASTWEGIRAAEVLQKEGIKCNMTLLFSLVQAAACAEAGAQLISPFVGRIYDWYKKQAGAEWNEEKDGGANDPGVQSVRRIYTYYKTFGYNTEVMGASFRTTSQITELAGCDLLTISPDLLQKLQDSNDTVTRKLSPDALQDKPAARVAIDEAAFRFQLNDDAMATEKLAEGIRVFAADAVKLEKLIDSLR.

Residue K126 is the Schiff-base intermediate with substrate of the active site.

The protein belongs to the transaldolase family. Type 1 subfamily. Homodimer.

The protein resides in the cytoplasm. The catalysed reaction is D-sedoheptulose 7-phosphate + D-glyceraldehyde 3-phosphate = D-erythrose 4-phosphate + beta-D-fructose 6-phosphate. Its pathway is carbohydrate degradation; pentose phosphate pathway; D-glyceraldehyde 3-phosphate and beta-D-fructose 6-phosphate from D-ribose 5-phosphate and D-xylulose 5-phosphate (non-oxidative stage): step 2/3. Functionally, transaldolase is important for the balance of metabolites in the pentose-phosphate pathway. The protein is Transaldolase of Burkholderia lata (strain ATCC 17760 / DSM 23089 / LMG 22485 / NCIMB 9086 / R18194 / 383).